Reading from the N-terminus, the 503-residue chain is Cardiolipin synthase (503 aa).

A run of 3 helical transmembrane segments spans residues 5 to 25 (LNVLAFFALLFAALYISRGFL), 30 to 50 (VGTLSVVFTLSVIFIGIIIFF), and 59 to 79 (LTWLLVLAAFPVVGFFFYLMF). 2 consecutive PLD phosphodiesterase domains span residues 238–265 (INYRNHRKIIVIDGVVGFVGGLNIGDEY) and 416–443 (NRGFMHSKIIIVDHEIASIGTSNMDMRS). Residues H243, K245, D250, H421, K423, and D428 contribute to the active site.

It belongs to the phospholipase D family. Cardiolipin synthase subfamily.

The protein localises to the cell membrane. It catalyses the reaction 2 a 1,2-diacyl-sn-glycero-3-phospho-(1'-sn-glycerol) = a cardiolipin + glycerol. In terms of biological role, catalyzes the reversible phosphatidyl group transfer from one phosphatidylglycerol molecule to another to form cardiolipin (CL) (diphosphatidylglycerol) and glycerol. This chain is Cardiolipin synthase (cls), found in Alkalihalophilus pseudofirmus (strain ATCC BAA-2126 / JCM 17055 / OF4) (Bacillus pseudofirmus).